The sequence spans 222 residues: Collectrin (222 aa).

Residues 1–14 form the signal peptide; the sequence is MLWALFFLVTTIHA. Residues 15 to 141 lie on the Extracellular side of the membrane; it reads ELCRPDAENA…LAPPMDPSVP (127 aa). The region spanning 21-222 is the Collectrin-like domain; that stretch reads AENAFKVRLS…LTEDERLTPL (202 aa). 2 N-linked (GlcNAc...) asparagine glycosylation sites follow: Asn76 and Asn93. Residues 142–162 form a helical membrane-spanning segment; sequence VWIIVFGVIFCIVTVAIALLV. Over 163–222 the chain is Cytoplasmic; the sequence is LSGIRQRRRNKKGPPGVEDAEDKCENIITIENGIPCDPLDMKGGHINDGFLTEDERLTPL. 2 positions are modified to phosphothreonine: Thr214 and Thr220.

This sequence belongs to the CLTRN family. In terms of assembly, monomer. Homodimer; dimerization prevents CLTRN cleavage by BACE2. Interacts with SLC6A18; this interaction regulates the trafficking of SLC6A18 to the cell membrane and its amino acid transporter activity. Interacts with SLC6A19; this interaction regulates the trafficking of SLC6A19 to the cell membrane and its amino acid transporter activity. Interacts with SNAPIN. Glycosylated. Glycosylation is required for plasma membrane localization and for its cleavage by BACE2. Post-translationally, proteolytically processed in pancreatic beta cells by BACE2 leading to the generation and extracellular release of soluble CLTRN, and a corresponding cell-associated C-terminal fragment which is later cleaved by gamma-secretase. This shedding process inactivates CLTRN. Three cleavage sites have been identified for BACE2, two clustered sites after Phe-116 and Leu-118 and a more membrane proximal site at Phe-125; the preferred BACE2 cleavage site seems to be between Phe-125 and Leu-126, Phe-116 and Leu-118 act as alternative sites. In terms of tissue distribution, kidney; collecting ducts. Pancreas; beta cells of islets.

It is found in the cell membrane. In terms of biological role, plays an important role in amino acid transport by acting as binding partner of amino acid transporters SLC6A18 and SLC6A19, regulating their trafficking on the cell surface and their activity. May also play a role in trafficking of amino acid transporters SLC3A1 and SLC7A9 to the renal cortical cell membrane. Regulator of SNARE complex function. Stimulator of beta cell replication. In Rattus norvegicus (Rat), this protein is Collectrin.